A 397-amino-acid chain; its full sequence is 2,3,4,5-tetrahydropyridine-2,6-dicarboxylate N-succinyltransferase (397 aa).

The active-site Acyl-anhydride intermediate is E265. Residues R267, G282, S285, A308, 323–324, G331, K360, and 373–376 each bind succinyl-CoA; these read DA and RQNS.

The protein belongs to the type 2 tetrahydrodipicolinate N-succinyltransferase family. As to quaternary structure, homotrimer.

The protein localises to the cytoplasm. It carries out the reaction (S)-2,3,4,5-tetrahydrodipicolinate + succinyl-CoA + H2O = (S)-2-succinylamino-6-oxoheptanedioate + CoA. It participates in amino-acid biosynthesis; L-lysine biosynthesis via DAP pathway; LL-2,6-diaminopimelate from (S)-tetrahydrodipicolinate (succinylase route): step 1/3. Functionally, catalyzes the conversion of the cyclic tetrahydrodipicolinate (THDP) into the acyclic N-succinyl-L-2-amino-6-oxopimelate using succinyl-CoA. This chain is 2,3,4,5-tetrahydropyridine-2,6-dicarboxylate N-succinyltransferase, found in Sulfurovum sp. (strain NBC37-1).